The sequence spans 474 residues: Glutathione synthetase (474 aa).

Alanine 2 bears the N-acetylalanine mark. Position 125 (arginine 125) interacts with substrate. ATP is bound at residue glutamate 144. 2 residues coordinate Mg(2+): glutamate 144 and asparagine 146. Residues 148 to 151 (ISAS), 214 to 216 (ERN), glutamine 220, and 267 to 270 (RDGY) contribute to the substrate site. Residues lysine 305, 364–373 (KPQREGGGNN), tyrosine 375, and 398–401 (MEKI) contribute to the ATP site. Glutamate 368 contacts Mg(2+). Serine 415 carries the post-translational modification Phosphoserine. Glutamate 425 lines the ATP pocket. Arginine 450 lines the substrate pocket. 2 residues coordinate ATP: lysine 452 and aspartate 458. 461–462 (VA) contributes to the substrate binding site.

This sequence belongs to the eukaryotic GSH synthase family. In terms of assembly, homodimer. Mg(2+) serves as cofactor.

It carries out the reaction gamma-L-glutamyl-L-cysteine + glycine + ATP = glutathione + ADP + phosphate + H(+). The enzyme catalyses gamma-L-glutamyl-(2S)-2-aminobutanoate + glycine + ATP = ophthalmate + ADP + phosphate + H(+). The protein operates within sulfur metabolism; glutathione biosynthesis; glutathione from L-cysteine and L-glutamate: step 2/2. Catalyzes the production of glutathione from gamma-glutamylcysteine and glycine in an ATP-dependent manner. Glutathione (gamma-glutamylcysteinylglycine, GSH) is the most abundant intracellular thiol in living aerobic cells and is required for numerous processes including the protection of cells against oxidative damage, amino acid transport, the detoxification of foreign compounds, the maintenance of protein sulfhydryl groups in a reduced state and acts as a cofactor for a number of enzymes. Participates in ophthalmate biosynthesis in hepatocytes. This is Glutathione synthetase from Mus musculus (Mouse).